A 258-amino-acid polypeptide reads, in one-letter code: Ribosomal RNA small subunit methyltransferase A (258 aa).

6 residues coordinate S-adenosyl-L-methionine: histidine 13, leucine 15, glycine 41, aspartate 63, aspartate 87, and asparagine 106.

The protein belongs to the class I-like SAM-binding methyltransferase superfamily. rRNA adenine N(6)-methyltransferase family. RsmA subfamily.

Its subcellular location is the cytoplasm. The catalysed reaction is adenosine(1518)/adenosine(1519) in 16S rRNA + 4 S-adenosyl-L-methionine = N(6)-dimethyladenosine(1518)/N(6)-dimethyladenosine(1519) in 16S rRNA + 4 S-adenosyl-L-homocysteine + 4 H(+). Functionally, specifically dimethylates two adjacent adenosines (A1518 and A1519) in the loop of a conserved hairpin near the 3'-end of 16S rRNA in the 30S particle. May play a critical role in biogenesis of 30S subunits. This Cytophaga hutchinsonii (strain ATCC 33406 / DSM 1761 / CIP 103989 / NBRC 15051 / NCIMB 9469 / D465) protein is Ribosomal RNA small subunit methyltransferase A.